A 388-amino-acid chain; its full sequence is MKALRSSSRLSRWREWAAPLWVGCNFSAWMRLLIRNRFAVHHSRWHFAVLYTFLSMVNSCLGLWQKIVFGRRVAETVIADPPIFIVGHWRTGTTLLHELLVVDDRHTGPTGYECLAPHHFLLTEWFAPYVEFLVSKHRAMDNMDLSLHHPQEDEFVWCMQGLPSPYLTIAFPNRPPQYEEYLDLEQVAPRELEIWKRTLFRFVQQVYFRRRKTVILKNPTHSFRIKVLLEVFPQAKFIHIVRDPYVVYPSTIHLHKALYRIHGLQQPTFDGLDDKVVSTYVDLYRKLDEGRELVDPTRFYELRYEDLIGDPEGQLRRLYQHLGLGDFECYLPRLRQYLADHADYKTNSYQLTVEQRAIVDEHWGEIIDRYGYDRHTPEPARLRPAVGG.

This sequence belongs to the Stf3 family.

The catalysed reaction is omega-hydroxy-beta-dihydromenaquinone-9 + 3'-phosphoadenylyl sulfate = omega-sulfo-beta-dihydromenaquinone-9 + adenosine 3',5'-bisphosphate + H(+). Functionally, involved in the biosynthesis of sulfomenaquinone (SMK, initially named S881 on the basis of its mass), which is localized in the outer envelope of M.bovis and negatively regulates its virulence. Catalyzes the transfer of a sulfonate group from 3'-phosphoadenosine-5'-phosphosulfate (PAPS) to omega-hydroxy-beta-dihydromenaquinone-9, generating omega-sulfo-beta-dihydromenaquinone-9 (sulfomenaquinone). The protein is Omega-hydroxy-beta-dihydromenaquinone-9 sulfotransferase Stf3 of Mycobacterium bovis (strain ATCC BAA-935 / AF2122/97).